The chain runs to 381 residues: Erythronate-4-phosphate dehydrogenase (381 aa).

Substrate contacts are provided by Ser45 and Thr66. Residues Asp146, Thr174, 205–207 (ASR), and Asp231 contribute to the NAD(+) site. Arg207 is a catalytic residue. Residue Glu236 is part of the active site. His253 serves as the catalytic Proton donor. Residue Gly256 participates in NAD(+) binding. Tyr257 contacts substrate.

This sequence belongs to the D-isomer specific 2-hydroxyacid dehydrogenase family. PdxB subfamily. As to quaternary structure, homodimer.

The protein localises to the cytoplasm. The enzyme catalyses 4-phospho-D-erythronate + NAD(+) = (R)-3-hydroxy-2-oxo-4-phosphooxybutanoate + NADH + H(+). It participates in cofactor biosynthesis; pyridoxine 5'-phosphate biosynthesis; pyridoxine 5'-phosphate from D-erythrose 4-phosphate: step 2/5. Its function is as follows. Catalyzes the oxidation of erythronate-4-phosphate to 3-hydroxy-2-oxo-4-phosphonooxybutanoate. The protein is Erythronate-4-phosphate dehydrogenase of Stutzerimonas stutzeri (strain A1501) (Pseudomonas stutzeri).